A 119-amino-acid polypeptide reads, in one-letter code: Large ribosomal subunit protein bL12 (119 aa).

It belongs to the bacterial ribosomal protein bL12 family. In terms of assembly, homodimer. Part of the ribosomal stalk of the 50S ribosomal subunit. Forms a multimeric L10(L12)X complex, where L10 forms an elongated spine to which 2 to 4 L12 dimers bind in a sequential fashion. Binds GTP-bound translation factors.

Functionally, forms part of the ribosomal stalk which helps the ribosome interact with GTP-bound translation factors. Is thus essential for accurate translation. The polypeptide is Large ribosomal subunit protein bL12 (Bacillus cytotoxicus (strain DSM 22905 / CIP 110041 / 391-98 / NVH 391-98)).